We begin with the raw amino-acid sequence, 129 residues long: UPF0325 protein Spro_3794 (129 aa).

It belongs to the UPF0325 family.

The protein is UPF0325 protein Spro_3794 of Serratia proteamaculans (strain 568).